Reading from the N-terminus, the 334-residue chain is Isocitrate/homoisocitrate dehydrogenase (334 aa).

An NADH-binding site is contributed by 70 to 72 (ATS). Residues Ser-72, Arg-85, Arg-88, Arg-98, Arg-118, Tyr-125, Lys-171, and Asn-173 each contribute to the (2R,3S)-homoisocitrate site. NADH is bound at residue Asn-173. Asp-204, Asp-228, and Asp-232 together coordinate Mg(2+). Residues 261–265 (GSAPD) and Asn-273 each bind NADH.

Belongs to the isocitrate and isopropylmalate dehydrogenases family. Homotetramer. Dimer of dimers. The homotetramer can transiently dissociate into homodimers. Mg(2+) serves as cofactor.

The catalysed reaction is (2R,3S)-homoisocitrate + NAD(+) = 2-oxoadipate + CO2 + NADH. The enzyme catalyses D-threo-isocitrate + NAD(+) = 2-oxoglutarate + CO2 + NADH. The protein operates within amino-acid biosynthesis; L-lysine biosynthesis via AAA pathway; L-alpha-aminoadipate from 2-oxoglutarate: step 4/5. Catalyzes the NAD(+)-dependent oxidative decarboxylation of homoisocitrate to 2-oxoadipate (alpha-ketoadipate), a reaction involved in lysine biosynthesis through the alpha-aminoadipate pathway. In addition, has high activity with isocitrate, but is inactive with 3-isopropylmalate. This is Isocitrate/homoisocitrate dehydrogenase (hicd) from Thermus thermophilus (strain ATCC BAA-163 / DSM 7039 / HB27).